The sequence spans 837 residues: Protein translocase subunit SecA 1 (837 aa).

Residues Gln85, 103 to 107 (GEGKT), and Asp492 contribute to the ATP site. The segment at 791 to 837 (KGEAINPAEGKPEAKRQPIRKDQHIGRNDPCPCGSGKKYKNCHGKEA) is disordered. The span at 800-817 (GKPEAKRQPIRKDQHIGR) shows a compositional bias: basic and acidic residues. Residues Cys821, Cys823, Cys832, and His833 each coordinate Zn(2+). Basic residues predominate over residues 827–837 (KKYKNCHGKEA).

It belongs to the SecA family. Monomer and homodimer. Part of the essential Sec protein translocation apparatus which comprises SecA, SecYEG and auxiliary proteins SecDF. Other proteins may also be involved. Requires Zn(2+) as cofactor.

It localises to the cell membrane. Its subcellular location is the cytoplasm. It catalyses the reaction ATP + H2O + cellular proteinSide 1 = ADP + phosphate + cellular proteinSide 2.. In terms of biological role, part of the Sec protein translocase complex. Interacts with the SecYEG preprotein conducting channel. Has a central role in coupling the hydrolysis of ATP to the transfer of proteins into and across the cell membrane, serving as an ATP-driven molecular motor driving the stepwise translocation of polypeptide chains across the membrane. The polypeptide is Protein translocase subunit SecA 1 (Listeria monocytogenes serovar 1/2a (strain ATCC BAA-679 / EGD-e)).